An 87-amino-acid polypeptide reads, in one-letter code: U3-theraphotoxin-Hhn1m (87 aa).

Positions 1–24 (MVNMKASMFLTFAGLVLLFVVCYA) are cleaved as a signal peptide. Residues 25–52 (SESEEKEFPKEMLSSIFAVDNDFKQEER) constitute a propeptide that is removed on maturation. Intrachain disulfides connect cysteine 54–cysteine 67, cysteine 61–cysteine 72, and cysteine 66–cysteine 79.

Belongs to the neurotoxin 10 (Hwtx-1) family. 51 (Hntx-8) subfamily. Hntx-8 sub-subfamily. In terms of tissue distribution, expressed by the venom gland.

The protein localises to the secreted. Ion channel inhibitor. The polypeptide is U3-theraphotoxin-Hhn1m (Cyriopagopus hainanus (Chinese bird spider)).